The following is a 305-amino-acid chain: Axin interactor, dorsalization-associated protein B (305 aa).

Residues 126 to 137 (ENLEVEEEEEDG) are compositionally biased toward acidic residues. Residues 126-146 (ENLEVEEEEEDGGAGAGSPDL) are disordered. The segment at 153–220 (GTLLPRLPSE…RKEDTYVHFN (68 aa)) is axin-binding. One can recognise a C2 Aida-type domain in the interval 156-303 (LPRLPSEPGM…LYLHLLQTLL (148 aa)).

Belongs to the AIDA family.

Acts as a ventralizing factor during embryogenesis. Inhibits axin-mediated JNK activation by binding axin and disrupting axin homodimerization. This in turn antagonizes a Wnt/beta-catenin-independent dorsalization pathway activated by axin/JNK-signaling. The polypeptide is Axin interactor, dorsalization-associated protein B (aida-b) (Xenopus laevis (African clawed frog)).